The following is a 927-amino-acid chain: Calmodulin-binding transcription activator CBT (927 aa).

Positions tyrosine 26 to methionine 152 form a DNA-binding region, CG-1. The interval leucine 70–glutamine 96 is necessary and sufficient for nuclear localization. The short motif at aspartate 72 to phenylalanine 79 is the Nuclear localization signal element. The ANK repeat unit spans residues serine 609 to leucine 638. 2 IQ domains span residues glutamate 757–histidine 786 and methionine 799–isoleucine 828. The calmodulin-binding stretch occupies residues valine 826–glycine 845. The interval glutamate 830–proline 851 is necessary and sufficient for nuclear localization. Residues phenylalanine 882–glutamate 911 form the IQ 3 domain.

This sequence belongs to the CAMTA family.

The protein localises to the nucleus. With respect to regulation, transcriptional activation activity is strongly reduced by calmodulin. In terms of biological role, transcription activator that binds calmodulin in a calcium-dependent manner in vitro. Binds to the DNA consensus sequence 5'-T[AC]CG[CT]GT[GT][GT][GT][GT]T[GT]CG-3'. The chain is Calmodulin-binding transcription activator CBT from Oryza sativa subsp. japonica (Rice).